The chain runs to 677 residues: Methionine--tRNA ligase (677 aa).

Positions P15–H25 match the 'HIGH' region motif. The Zn(2+) site is built by C146, C149, C159, and C162. Residues K333–S337 carry the 'KMSKS' region motif. K336 contributes to the ATP binding site. A tRNA-binding domain is found at D575–K677.

The protein belongs to the class-I aminoacyl-tRNA synthetase family. MetG type 1 subfamily. Homodimer. Zn(2+) is required as a cofactor.

It localises to the cytoplasm. The catalysed reaction is tRNA(Met) + L-methionine + ATP = L-methionyl-tRNA(Met) + AMP + diphosphate. Its function is as follows. Is required not only for elongation of protein synthesis but also for the initiation of all mRNA translation through initiator tRNA(fMet) aminoacylation. The polypeptide is Methionine--tRNA ligase (Salmonella paratyphi C (strain RKS4594)).